Here is a 613-residue protein sequence, read N- to C-terminus: Arginine--tRNA ligase (613 aa).

The 'HIGH' region signature appears at 123–133 (PNVAKPMHVGH).

It belongs to the class-I aminoacyl-tRNA synthetase family. In terms of assembly, monomer.

It localises to the cytoplasm. The catalysed reaction is tRNA(Arg) + L-arginine + ATP = L-arginyl-tRNA(Arg) + AMP + diphosphate. The sequence is that of Arginine--tRNA ligase from Caulobacter sp. (strain K31).